A 384-amino-acid chain; its full sequence is 23S rRNA (uracil(747)-C(5))-methyltransferase RlmC (384 aa).

[4Fe-4S] cluster-binding residues include C7, C15, C18, and C94. Positions 219, 248, 269, and 316 each coordinate S-adenosyl-L-methionine. C343 functions as the Nucleophile in the catalytic mechanism.

The protein belongs to the class I-like SAM-binding methyltransferase superfamily. RNA M5U methyltransferase family. RlmC subfamily.

The enzyme catalyses uridine(747) in 23S rRNA + S-adenosyl-L-methionine = 5-methyluridine(747) in 23S rRNA + S-adenosyl-L-homocysteine + H(+). In terms of biological role, catalyzes the formation of 5-methyl-uridine at position 747 (m5U747) in 23S rRNA. The polypeptide is 23S rRNA (uracil(747)-C(5))-methyltransferase RlmC (Shewanella sp. (strain MR-7)).